Here is a 346-residue protein sequence, read N- to C-terminus: Probable electron transfer flavoprotein subunit alpha, mitochondrial (346 aa).

285–313 (LYVAIGISGAIQHLAGMKESKMIIAINKD) contacts FAD.

Belongs to the ETF alpha-subunit/FixB family. As to quaternary structure, heterodimer of an alpha and a beta subunit. Requires FAD as cofactor.

The protein localises to the mitochondrion matrix. Its function is as follows. The electron transfer flavoprotein serves as a specific electron acceptor for several dehydrogenases, including five acyl-CoA dehydrogenases, glutaryl-CoA and sarcosine dehydrogenase. It transfers the electrons to the main mitochondrial respiratory chain via ETF-ubiquinone oxidoreductase (ETF dehydrogenase). The sequence is that of Probable electron transfer flavoprotein subunit alpha, mitochondrial (ETF1) from Cryptococcus neoformans var. neoformans serotype D (strain B-3501A) (Filobasidiella neoformans).